Consider the following 262-residue polypeptide: Sugar fermentation stimulation protein homolog (262 aa).

The protein belongs to the SfsA family.

In Lawsonia intracellularis (strain PHE/MN1-00), this protein is Sugar fermentation stimulation protein homolog.